The sequence spans 141 residues: Large ribosomal subunit protein uL11 (141 aa).

It belongs to the universal ribosomal protein uL11 family. Part of the ribosomal stalk of the 50S ribosomal subunit. Interacts with L10 and the large rRNA to form the base of the stalk. L10 forms an elongated spine to which L12 dimers bind in a sequential fashion forming a multimeric L10(L12)X complex. In terms of processing, one or more lysine residues are methylated.

Its function is as follows. Forms part of the ribosomal stalk which helps the ribosome interact with GTP-bound translation factors. This Exiguobacterium sibiricum (strain DSM 17290 / CCUG 55495 / CIP 109462 / JCM 13490 / 255-15) protein is Large ribosomal subunit protein uL11.